Consider the following 202-residue polypeptide: Superoxide dismutase [Mn] (202 aa).

The Mn(2+) site is built by His27, His82, Asp164, and His168.

It belongs to the iron/manganese superoxide dismutase family. As to quaternary structure, homodimer. Mn(2+) serves as cofactor.

It catalyses the reaction 2 superoxide + 2 H(+) = H2O2 + O2. Destroys superoxide anion radicals which are normally produced within the cells and which are toxic to biological systems. This chain is Superoxide dismutase [Mn] (sodA), found in Listeria ivanovii.